The following is a 476-amino-acid chain: Serine/threonine-protein kinase WAG1 (476 aa).

Residues 93–400 (FKLVRHLGTG…AQDIKRHEFF (308 aa)) enclose the Protein kinase domain. ATP contacts are provided by residues 99-107 (LGTGNLGRV) and lysine 124. The active-site Proton acceptor is the aspartate 219.

It belongs to the protein kinase superfamily. Ser/Thr protein kinase family. Expressed in root tips and lateral root primordia.

Its subcellular location is the cytoplasm. The protein localises to the cytosol. It catalyses the reaction L-seryl-[protein] + ATP = O-phospho-L-seryl-[protein] + ADP + H(+). The enzyme catalyses L-threonyl-[protein] + ATP = O-phospho-L-threonyl-[protein] + ADP + H(+). Functionally, serine/threonine-protein kinase involved in the regulation of auxin signaling. Acts as a positive regulator of cellular auxin efflux and regulates organ development by enhancing PIN-mediated polar auxin transport. Phosphorylates conserved serine residues in the PIN auxin efflux carriers. Phosphorylation of PIN proteins is required and sufficient for apical-basal PIN polarity that enables directional intercellular auxin fluxes, which mediate differential growth, tissue patterning and organogenesis. Acts as a suppressor of root waving. The polypeptide is Serine/threonine-protein kinase WAG1 (WAG1) (Arabidopsis thaliana (Mouse-ear cress)).